The chain runs to 108 residues: PTS system cellobiose-specific EIIB component (108 aa).

Positions 3–108 (DKVIALACAA…VLAAAENLMN (106 aa)) constitute a PTS EIIB type-3 domain. The active-site Phosphocysteine intermediate is the cysteine 10. Phosphocysteine; by EIIA is present on cysteine 10.

The enzyme catalyses D-cellobiose(out) + N(pros)-phospho-L-histidyl-[protein] = 6-phospho-beta-D-glucosyl-(1-&gt;4)-D-glucose(in) + L-histidyl-[protein]. In terms of biological role, the phosphoenolpyruvate-dependent sugar phosphotransferase system (sugar PTS), a major carbohydrate active transport system, catalyzes the phosphorylation of incoming sugar substrates concomitantly with their translocation across the cell membrane. Involved in cellobiose transport with PtcA and CelB. This system can also transport lactose. The sequence is that of PTS system cellobiose-specific EIIB component from Lactococcus lactis subsp. lactis (strain IL1403) (Streptococcus lactis).